Reading from the N-terminus, the 154-residue chain is 6,7-dimethyl-8-ribityllumazine synthase (154 aa).

5-amino-6-(D-ribitylamino)uracil-binding positions include phenylalanine 22, 56–58 (AFE), and 80–82 (AVI). 85-86 (ST) is a (2S)-2-hydroxy-3-oxobutyl phosphate binding site. Residue histidine 88 is the Proton donor of the active site. A 5-amino-6-(D-ribitylamino)uracil-binding site is contributed by phenylalanine 113. Arginine 127 is a binding site for (2S)-2-hydroxy-3-oxobutyl phosphate.

This sequence belongs to the DMRL synthase family.

The catalysed reaction is (2S)-2-hydroxy-3-oxobutyl phosphate + 5-amino-6-(D-ribitylamino)uracil = 6,7-dimethyl-8-(1-D-ribityl)lumazine + phosphate + 2 H2O + H(+). Its pathway is cofactor biosynthesis; riboflavin biosynthesis; riboflavin from 2-hydroxy-3-oxobutyl phosphate and 5-amino-6-(D-ribitylamino)uracil: step 1/2. Functionally, catalyzes the formation of 6,7-dimethyl-8-ribityllumazine by condensation of 5-amino-6-(D-ribitylamino)uracil with 3,4-dihydroxy-2-butanone 4-phosphate. This is the penultimate step in the biosynthesis of riboflavin. The chain is 6,7-dimethyl-8-ribityllumazine synthase from Clostridium kluyveri (strain NBRC 12016).